A 142-amino-acid polypeptide reads, in one-letter code: Large ribosomal subunit protein uL11 (142 aa).

In terms of assembly, part of the ribosomal stalk of the 50S ribosomal subunit. Interacts with L10 and the large rRNA to form the base of the stalk. L10 forms an elongated spine to which L12 dimers bind in a sequential fashion forming a multimeric L10(L12)X complex. Post-translationally, lys-40 is trimethylated or acetylated; other modifications may also exist.

Functionally, forms part of the ribosomal stalk which helps the ribosome interact with GTP-bound translation factors. This is Large ribosomal subunit protein uL11 from Rhodopseudomonas palustris (strain ATCC BAA-98 / CGA009).